Consider the following 469-residue polypeptide: MNPNQKIITIGSVSLTIATICFLMQIAILVTTVTLHFKQYECSSPPNNQVMPCEPIIIERNITEIVYLTNTTIDKEICPKLVEYRNWSKPQCKITGFAPFSKDNSIRLSAGGGIWVTREPYVSCDPGKCYQFALGQGTTLDNKHSNDTIHDRTPYRTLLMNELGVPFHLGTRQVCIAWSSSSCHDGKAWLHVCVTGYDKNATASFIYDGRLVDSIGSWSKNILRTQESECVCINGTCTVVMTDGSASERADTKILFIEEGKIVHISPLSGSAQHVEECSCYPRYPGVRCVCRDNWKGSNRPVVDINVKDYSIVSSYVCSGLVGDTPRKNDRSSSSYCRNPNNEKGNHGVKGWAFDDGNDVWMGRTISEESRSGYETFKVIGGWSTPNSKLQINRQVIVDSDNRSGYSGIFSVEGKSCINRCFYVELIRGREQETRVWWTSNSIVVFCGTSGTYGTGSWPDGADINLMPI.

At 1–9 the chain is on the intravirion side; sequence MNPNQKIIT. The helical transmembrane segment at 10–30 threads the bilayer; that stretch reads IGSVSLTIATICFLMQIAILV. The segment at 11 to 33 is involved in apical transport and lipid raft association; the sequence is GSVSLTIATICFLMQIAILVTTV. Topologically, residues 31-469 are virion surface; it reads TTVTLHFKQY…DGADINLMPI (439 aa). The tract at residues 36–88 is hypervariable stalk region; sequence HFKQYECSSPPNNQVMPCEPIIIERNITEIVYLTNTTIDKEICPKLVEYRNWS. Asparagine 61, asparagine 70, and asparagine 86 each carry an N-linked (GlcNAc...) asparagine; by host glycan. The tract at residues 91–469 is head of neuraminidase; it reads QCKITGFAPF…DGADINLMPI (379 aa). 8 cysteine pairs are disulfide-bonded: cysteine 92–cysteine 417, cysteine 124–cysteine 129, cysteine 183–cysteine 230, cysteine 232–cysteine 237, cysteine 278–cysteine 291, cysteine 280–cysteine 289, cysteine 318–cysteine 337, and cysteine 421–cysteine 447. Position 118 (arginine 118) interacts with substrate. N-linked (GlcNAc...) asparagine; by host glycosylation is present at asparagine 146. The Proton donor/acceptor role is filled by aspartate 151. Arginine 152 lines the substrate pocket. 2 N-linked (GlcNAc...) asparagine; by host glycosylation sites follow: asparagine 200 and asparagine 234. 276 to 277 contacts substrate; that stretch reads EE. Residue arginine 292 coordinates substrate. Ca(2+) is bound by residues aspartate 293, glycine 297, and aspartate 324. A substrate-binding site is contributed by arginine 371. Asparagine 402 carries N-linked (GlcNAc...) asparagine; by host glycosylation. Catalysis depends on tyrosine 406, which acts as the Nucleophile.

The protein belongs to the glycosyl hydrolase 34 family. Homotetramer. It depends on Ca(2+) as a cofactor. In terms of processing, N-glycosylated.

It is found in the virion membrane. The protein localises to the host apical cell membrane. The enzyme catalyses Hydrolysis of alpha-(2-&gt;3)-, alpha-(2-&gt;6)-, alpha-(2-&gt;8)- glycosidic linkages of terminal sialic acid residues in oligosaccharides, glycoproteins, glycolipids, colominic acid and synthetic substrates.. Its activity is regulated as follows. Inhibited by the neuraminidase inhibitors zanamivir (Relenza) and oseltamivir (Tamiflu). These drugs interfere with the release of progeny virus from infected cells and are effective against all influenza strains. Resistance to neuraminidase inhibitors is quite rare. In terms of biological role, catalyzes the removal of terminal sialic acid residues from viral and cellular glycoconjugates. Cleaves off the terminal sialic acids on the glycosylated HA during virus budding to facilitate virus release. Additionally helps virus spread through the circulation by further removing sialic acids from the cell surface. These cleavages prevent self-aggregation and ensure the efficient spread of the progeny virus from cell to cell. Otherwise, infection would be limited to one round of replication. Described as a receptor-destroying enzyme because it cleaves a terminal sialic acid from the cellular receptors. May facilitate viral invasion of the upper airways by cleaving the sialic acid moieties on the mucin of the airway epithelial cells. Likely to plays a role in the budding process through its association with lipid rafts during intracellular transport. May additionally display a raft-association independent effect on budding. Plays a role in the determination of host range restriction on replication and virulence. Sialidase activity in late endosome/lysosome traffic seems to enhance virus replication. The chain is Neuraminidase from Aves (whales).